Consider the following 129-residue polypeptide: Ig kappa chain V-IV region S107B (129 aa).

The first 22 residues, Met-1–Gly-22, serve as a signal peptide directing secretion. The tract at residues Glu-23 to Cys-45 is framework-1. Cysteines 45 and 111 form a disulfide. The tract at residues Ser-46–His-57 is complementarity-determining-1. Residues Trp-58–His-72 form a framework-2 region. Residues Arg-73–Ser-79 are complementarity-determining-2. The framework-3 stretch occupies residues Gly-80–Cys-111. Positions Gln-112–Pro-118 are complementarity-determining-3. The segment at Phe-119–Lys-128 is framework-4.

The protein is Ig kappa chain V-IV region S107B of Mus musculus (Mouse).